Consider the following 154-residue polypeptide: Ribosome maturation factor RimP (154 aa).

It belongs to the RimP family.

It is found in the cytoplasm. Its function is as follows. Required for maturation of 30S ribosomal subunits. The sequence is that of Ribosome maturation factor RimP from Finegoldia magna (strain ATCC 29328 / DSM 20472 / WAL 2508) (Peptostreptococcus magnus).